Here is a 484-residue protein sequence, read N- to C-terminus: UDP-N-acetylmuramate--L-alanine ligase (484 aa).

126-132 (GTHGKTT) lines the ATP pocket.

Belongs to the MurCDEF family.

It is found in the cytoplasm. It carries out the reaction UDP-N-acetyl-alpha-D-muramate + L-alanine + ATP = UDP-N-acetyl-alpha-D-muramoyl-L-alanine + ADP + phosphate + H(+). Its pathway is cell wall biogenesis; peptidoglycan biosynthesis. Functionally, cell wall formation. The chain is UDP-N-acetylmuramate--L-alanine ligase from Aeromonas hydrophila subsp. hydrophila (strain ATCC 7966 / DSM 30187 / BCRC 13018 / CCUG 14551 / JCM 1027 / KCTC 2358 / NCIMB 9240 / NCTC 8049).